The primary structure comprises 549 residues: Chaperonin GroEL (549 aa).

ATP-binding positions include 29-32 (TLGP), K50, 86-90 (DGTTT), G413, 479-481 (NAA), and D496. Residues 522-549 (VSDKPEKPQQGGQGGGGMGGGDMGGMDF) form a disordered region. Positions 532 to 549 (GGQGGGGMGGGDMGGMDF) are enriched in gly residues.

Belongs to the chaperonin (HSP60) family. Forms a cylinder of 14 subunits composed of two heptameric rings stacked back-to-back. Interacts with the co-chaperonin GroES.

The protein resides in the cytoplasm. The enzyme catalyses ATP + H2O + a folded polypeptide = ADP + phosphate + an unfolded polypeptide.. In terms of biological role, together with its co-chaperonin GroES, plays an essential role in assisting protein folding. The GroEL-GroES system forms a nano-cage that allows encapsulation of the non-native substrate proteins and provides a physical environment optimized to promote and accelerate protein folding. The protein is Chaperonin GroEL of Deinococcus deserti (strain DSM 17065 / CIP 109153 / LMG 22923 / VCD115).